The following is a 236-amino-acid chain: Small ribosomal subunit protein bS21m (236 aa).

Residues 65-136 (KPAAGAAAGG…SSKPSPMQTW (72 aa)) are disordered. Residues 107 to 131 (SNSSTSSSSSSSSSGGALYSSSKPS) are compositionally biased toward low complexity.

Belongs to the bacterial ribosomal protein bS21 family. In terms of assembly, component of the mitochondrial small ribosomal subunit (mt-SSU). Mature N.crassa 74S mitochondrial ribosomes consist of a small (37S) and a large (54S) subunit. The 37S small subunit contains a 16S ribosomal RNA (16S mt-rRNA) and 32 different proteins. The 54S large subunit contains a 23S rRNA (23S mt-rRNA) and 42 different proteins.

Its subcellular location is the mitochondrion. Its function is as follows. Component of the mitochondrial ribosome (mitoribosome), a dedicated translation machinery responsible for the synthesis of mitochondrial genome-encoded proteins, including at least some of the essential transmembrane subunits of the mitochondrial respiratory chain. The mitoribosomes are attached to the mitochondrial inner membrane and translation products are cotranslationally integrated into the membrane. This is Small ribosomal subunit protein bS21m (mrp21) from Neurospora crassa (strain ATCC 24698 / 74-OR23-1A / CBS 708.71 / DSM 1257 / FGSC 987).